The following is a 575-amino-acid chain: V-type ATP synthase alpha chain (575 aa).

238–245 (GPFGAGKT) serves as a coordination point for ATP.

The protein belongs to the ATPase alpha/beta chains family.

It catalyses the reaction ATP + H2O + 4 H(+)(in) = ADP + phosphate + 5 H(+)(out). In terms of biological role, produces ATP from ADP in the presence of a proton gradient across the membrane. The V-type alpha chain is a catalytic subunit. The chain is V-type ATP synthase alpha chain from Borreliella afzelii (strain PKo) (Borrelia afzelii).